Consider the following 647-residue polypeptide: Pumilio homolog 3 (647 aa).

The segment covering 1–10 (MEVKGKKKIT) has biased composition (basic residues). Residues 1-123 (MEVKGKKKIT…KKKKELKQNR (123 aa)) are disordered. Lys-33 bears the N6-acetyllysine mark. Over residues 59–68 (PGKKRVKQFK) the composition is skewed to basic residues. Residues 93–123 (FQPDGKSDESAAKKPKWDDFKKKKKELKQNR) are compositionally biased toward basic and acidic residues. Residues 105–117 (KKPKWDDFKKKKK) carry the Nuclear localization signal motif. The region spanning 142 to 509 (ESLRRKDCDK…VVLDKSVCVL (368 aa)) is the PUM-HD domain. Pumilio repeat units lie at residues 176-211 (HDST…LSKA), 212-247 (KYSR…MLRH), 248-276 (SEAS…ELYG), 288-324 (PTLE…VIKH), 325-360 (SLVH…LAHT), 361-396 (HDGA…IANG), 397-434 (QYSH…IVND), 435-503 (KYGR…VVLD), 504-550 (KSVC…IAEH), 551-595 (PAGH…WASI), and 596-635 (NRGA…KSTS).

Interacts with PARP1 (via catalytic domain).

It is found in the nucleus. The protein localises to the nucleolus. The protein resides in the nucleoplasm. It localises to the chromosome. In terms of biological role, inhibits the poly(ADP-ribosyl)ation activity of PARP1 and the degradation of PARP1 by CASP3 following genotoxic stress. Binds to double-stranded RNA or DNA without sequence specificity. Involved in development of the eye and of primordial germ cells. This is Pumilio homolog 3 from Rattus norvegicus (Rat).